The primary structure comprises 847 residues: Rho GTPase-activating protein 12 (847 aa).

Residues proline 12–arginine 74 enclose the SH3 domain. A disordered region spans residues leucine 110 to proline 241. Polar residues-rich tracts occupy residues glycine 117–threonine 174 and threonine 191–aspartate 200. Phosphoserine is present on serine 165. 3 positions are modified to phosphoserine: serine 201, serine 213, and serine 215. Polar residues predominate over residues threonine 224 to asparagine 234. Phosphothreonine is present on residues threonine 230 and threonine 231. A Phosphoserine modification is found at serine 240. Tyrosine 243 carries the post-translational modification Phosphotyrosine. 2 WW domains span residues isoleucine 265–tryptophan 298 and aspartate 358–tyrosine 391. Residues tryptophan 293 to leucine 317 are disordered. Disordered regions lie at residues aspartate 428–lysine 466 and proline 591–lysine 625. Positions asparagine 445–proline 461 are enriched in polar residues. One can recognise a PH domain in the interval aspartate 463–asparagine 575. Serine 593 is modified (phosphoserine). Basic and acidic residues predominate over residues glycine 595–lysine 610. The 189-residue stretch at serine 657 to phenylalanine 845 folds into the Rho-GAP domain.

Its function is as follows. GTPase activator for the Rho-type GTPases by converting them to an inactive GDP-bound state. The protein is Rho GTPase-activating protein 12 (ARHGAP12) of Macaca fascicularis (Crab-eating macaque).